A 518-amino-acid chain; its full sequence is Prosaposin (518 aa).

Residues 1–17 (MARRLLTLLGLLAAAVA) form the signal peptide. Positions 18-60 (SPVLWQKDCAKGPEVWCQSLRTASQCGAVKHCQQNVWSKPAVN) are excised as a propeptide. A Saposin A-type 1 domain is found at 19-59 (PVLWQKDCAKGPEVWCQSLRTASQCGAVKHCQQNVWSKPAV). Saposin B-type domains are found at residues 60 to 143 (NSIP…QSLQ), 193 to 277 (TEDV…PSVK), 307 to 388 (TFSV…AANK), and 399 to 480 (AGGF…GAAK). 3 disulfides stabilise this stretch: cysteine 64–cysteine 139, cysteine 67–cysteine 133, and cysteine 95–cysteine 107. Residue asparagine 81 is glycosylated (N-linked (GlcNAc...) asparagine). Residues 144 to 193 (KHLAAMKLQKQLQSNKIPELDFSELTSPFMANVPLLLYPQDKPKQKSKAT) constitute a propeptide that is removed on maturation. 3 disulfides stabilise this stretch: cysteine 197–cysteine 273, cysteine 200–cysteine 267, and cysteine 229–cysteine 240. Asparagine 214 is a glycosylation site (N-linked (GlcNAc...) asparagine). A propeptide spanning residues 277–306 (KSVPLQTLVPAQVVHEVKMETVEKATVQEK) is cleaved from the precursor. 3 disulfides stabilise this stretch: cysteine 311–cysteine 384, cysteine 314–cysteine 378, and cysteine 342–cysteine 353. N-linked (GlcNAc...) asparagine glycosylation is present at asparagine 328. A propeptide spanning residues 388–398 (KPPQQPVVVKP) is cleaved from the precursor. Intrachain disulfides connect cysteine 403–cysteine 476, cysteine 406–cysteine 470, and cysteine 434–cysteine 445. The N-linked (GlcNAc...) asparagine glycan is linked to asparagine 420. The propeptide occupies 480–518 (KKPLLGEDACVWGPGYWCKNMETAAQCNAVDHCRRHVWN). One can recognise a Saposin A-type 2 domain in the interval 482 to 518 (PLLGEDACVWGPGYWCKNMETAAQCNAVDHCRRHVWN).

As to quaternary structure, saposin-B is a homodimer. This precursor is proteolytically processed to 4 small peptides, which are similar to each other and are sphingolipid hydrolase activator proteins.

It is found in the lysosome. The protein resides in the secreted. Functionally, the lysosomal degradation of sphingolipids takes place by the sequential action of specific hydrolases. Some of these enzymes require specific low-molecular mass, non-enzymatic proteins: the sphingolipids activator proteins (coproteins). Its function is as follows. Saposin-A and saposin-C stimulate the hydrolysis of glucosylceramide by beta-glucosylceramidase (EC 3.2.1.45) and galactosylceramide by beta-galactosylceramidase (EC 3.2.1.46). Saposin-C apparently acts by combining with the enzyme and acidic lipid to form an activated complex, rather than by solubilizing the substrate. Saposin-B stimulates the hydrolysis of galacto-cerebroside sulfate by arylsulfatase A (EC 3.1.6.8), GM1 gangliosides by beta-galactosidase (EC 3.2.1.23) and globotriaosylceramide by alpha-galactosidase A (EC 3.2.1.22). Saposin-B forms a solubilizing complex with the substrates of the sphingolipid hydrolases. In terms of biological role, saposin-D is a specific sphingomyelin phosphodiesterase activator (EC 3.1.4.12). In Gallus gallus (Chicken), this protein is Prosaposin (PSAP).